The chain runs to 231 residues: F-box protein SKIP8 (231 aa).

The disordered stretch occupies residues 1 to 24 (MPSTPLANGGTPPMGGGERTTVTT). In terms of domain architecture, F-box spans 34–80 (VSMMEQLVPEITTHALSYLDYPSLCRLSMTNSLMRKAANDDNAWKAL).

Part of a SCF (ASK-cullin-F-box) protein ligase complex. Interacts with SKP1A/ASK1.

It functions in the pathway protein modification; protein ubiquitination. Component of SCF(ASK-cullin-F-box) E3 ubiquitin ligase complexes, which may mediate the ubiquitination and subsequent proteasomal degradation of target proteins. The polypeptide is F-box protein SKIP8 (SKIP8) (Arabidopsis thaliana (Mouse-ear cress)).